The following is a 1321-amino-acid chain: Insulin receptor substrate 2 (1321 aa).

Positions 1 to 10 are enriched in pro residues; the sequence is MASAPLPGPP. Disordered regions lie at residues 1–32 and 51–73; these read MASA…HSVR and RGPG…PPRL. Residues 16–144 enclose the PH domain; that stretch reads DGPNLNNNNN…WYRALTDLVS (129 aa). The span at 18–28 shows a compositional bias: low complexity; sequence PNLNNNNNNNN. An IRS-type PTB domain is found at 191-295; the sequence is YREVWQVNLK…EAMKALKELF (105 aa). The interval 299–536 is disordered; it reads PRSKSQSSGS…ARDGSGGELY (238 aa). 2 positions are modified to phosphoserine: S303 and S343. T347 is subject to Phosphothreonine. Phosphoserine is present on S362. The span at 364-376 shows a compositional bias: gly residues; sequence GDGGAAGGAGTAG. Residues S381, S385, and S388 each carry the phosphoserine modification. An Omega-N-methylarginine modification is found at R409. Low complexity-rich tracts occupy residues 435 to 456 and 478 to 490; these read SPPA…SGSY and PSSG…GSPS. T517 is modified (phosphothreonine). S520 carries the phosphoserine modification. T524 bears the Phosphothreonine mark. The residue at position 536 (Y536) is a Phosphotyrosine; by INSR. Residues 536 to 539 carry the YXXM motif 1 motif; sequence YGYM. S556 is modified (phosphoserine; by PLK1). S573 is modified (phosphoserine). A phosphothreonine mark is found at T575 and T576. S590 is modified (phosphoserine). The YXXM motif 2 signature appears at 594 to 597; sequence YTLM. A phosphoserine mark is found at S604 and S616. Position 649 is a phosphotyrosine (Y649). 2 consecutive short sequence motifs (YXXM motif) follow at residues 649–652 and 671–674; these read YMPM. At Y671 the chain carries Phosphotyrosine; by INSR. Phosphoserine is present on residues S675, S678, S727, and S728. The short motif at 734–737 is the YXXM motif 5 element; sequence YMRM. The residue at position 762 (S762) is a Phosphoserine. T771 is modified (phosphothreonine). S796 carries the post-translational modification Phosphoserine. The short motif at 814 to 817 is the YXXM motif 6 element; it reads YVLM. Phosphoserine is present on S819. Disordered regions lie at residues 834-871 and 888-1091; these read ATPG…RPEG and EGLQ…ASPT. At S907 the chain carries Phosphoserine. A Phosphotyrosine; by INSR modification is found at Y911. The segment covering 930–959 has biased composition (low complexity); that stretch reads LLASAASSSSLLSASSPASSLGSGTPGTSS. S965 is modified (phosphoserine). Y970 carries the post-translational modification Phosphotyrosine; by INSR. The span at 1005-1014 shows a compositional bias: pro residues; the sequence is PYPPLPPRPS. The span at 1039–1055 shows a compositional bias: polar residues; that stretch reads AATSQGPTAGSSMSSEP. Residues 1061 to 1064 carry the YXXM motif 7 motif; sequence YTEM. T1071 carries the phosphothreonine modification. Pro residues predominate over residues 1072–1082; that stretch reads PPQPIVAPPKP. S1089 is modified (phosphoserine). Phosphoserine; by PLK1 is present on S1098. A disordered region spans residues 1110–1198; the sequence is LQVSQPPDPH…TSPGQAQPLV (89 aa). Over residues 1139-1154 the composition is skewed to low complexity; sequence ETFSSTTTVTPVSPSF. T1148 is subject to Phosphothreonine. S1151, S1163, S1165, S1175, and S1190 each carry phosphoserine. Positions 1163–1179 are enriched in polar residues; sequence SASVENVSLRKSSEGSS. At Y1242 the chain carries Phosphotyrosine; by INSR. Residues 1251-1275 are disordered; that stretch reads QGSLAQSQPQPGDKNSWSRTRSLGG. Residues 1253 to 1271 show a composition bias toward polar residues; that stretch reads SLAQSQPQPGDKNSWSRTR. Residue Y1303 is modified to Phosphotyrosine; by INSR. Residue K1314 forms a Glycyl lysine isopeptide (Lys-Gly) (interchain with G-Cter in ubiquitin) linkage.

Interacts with PHIP. Interacts with SH2B1; this interaction enhances leptin-induced activation of the PI3-kinase pathway. Interacts with GRB2. Interacts with PIK3R1. Interacts with DVL2; this interaction promotes the Wnt/beta-catenin signaling pathway. Phosphorylation fluctuates in a cell-cycle dependent manner with hyperphosphorylation during mitosis. Phosphorylated at Ser-556 and Ser-1098 by PLK1; these phosphorylations prevent the activation of the PI3K pathway upon growth factor stimulation by inhibiting the binding between IRS2 and the PI3K pathway components and increasing the level of IRS2 protein degradation. In addition, they prevent premature mitotic exit. Post-translationally, monoubiquitinated by NEDD4; leading to enhanced IGF1 signaling. During cell cycle, ubiquitination and proteasomal degradation are controlled by FZR1. Skeletal muscle, lung, brain, liver, kidney, heart and spleen.

It is found in the cytoplasm. Its subcellular location is the cytosol. Signaling adapter protein that participates in the signal transduction from two prominent receptor tyrosine kinases, insulin receptor/INSR and insulin-like growth factor I receptor/IGF1R. Plays therefore an important role in development, growth, glucose homeostasis as well as lipid metabolism. Upon phosphorylation by the insulin receptor, functions as a signaling scaffold that propagates insulin action through binding to SH2 domain-containing proteins including the p85 regulatory subunit of PI3K, NCK1, NCK2, GRB2 or SHP2. Recruitment of GRB2 leads to the activation of the guanine nucleotide exchange factor SOS1 which in turn triggers the Ras/Raf/MEK/MAPK signaling cascade. Activation of the PI3K/AKT pathway is responsible for most of insulin metabolic effects in the cell, and the Ras/Raf/MEK/MAPK is involved in the regulation of gene expression and in cooperation with the PI3K pathway regulates cell growth and differentiation. Acts a positive regulator of the Wnt/beta-catenin signaling pathway through suppression of DVL2 autophagy-mediated degradation leading to cell proliferation. Plays a role in cell cycle progression by promoting a robust spindle assembly checkpoint (SAC) during M-phase. In macrophages, IL4-induced tyrosine phosphorylation of IRS2 leads to the recruitment and activation of phosphoinositide 3-kinase (PI3K). The protein is Insulin receptor substrate 2 (Irs2) of Mus musculus (Mouse).